The primary structure comprises 284 residues: Diaminopimelate epimerase (284 aa).

Positions 13 and 70 each coordinate substrate. C79 (proton donor) is an active-site residue. Residues 80–81, N167, N200, and 218–219 contribute to the substrate site; these read GN and ER. Residue C227 is the Proton acceptor of the active site. Substrate is bound at residue 228-229; that stretch reads GT.

The protein belongs to the diaminopimelate epimerase family. Homodimer.

The protein localises to the cytoplasm. It carries out the reaction (2S,6S)-2,6-diaminopimelate = meso-2,6-diaminopimelate. It functions in the pathway amino-acid biosynthesis; L-lysine biosynthesis via DAP pathway; DL-2,6-diaminopimelate from LL-2,6-diaminopimelate: step 1/1. Catalyzes the stereoinversion of LL-2,6-diaminopimelate (L,L-DAP) to meso-diaminopimelate (meso-DAP), a precursor of L-lysine and an essential component of the bacterial peptidoglycan. This chain is Diaminopimelate epimerase, found in Prochlorococcus marinus (strain NATL2A).